Here is a 314-residue protein sequence, read N- to C-terminus: Curved DNA-binding protein (314 aa).

In terms of domain architecture, J spans 5–69 (DYYKILDVEP…EKRAEYDELR (65 aa)). A disordered region spans residues 73-92 (RQGRPFQTPPGWQSRAGAGA).

The protein resides in the cytoplasm. It localises to the nucleoid. Its function is as follows. DNA-binding protein that preferentially recognizes a curved DNA sequence. It is probably a functional analog of DnaJ; displays overlapping activities with DnaJ, but functions under different conditions, probably acting as a molecular chaperone in an adaptive response to environmental stresses other than heat shock. Lacks autonomous chaperone activity; binds native substrates and targets them for recognition by DnaK. Its activity is inhibited by the binding of CbpM. The chain is Curved DNA-binding protein from Pseudomonas syringae pv. tomato (strain ATCC BAA-871 / DC3000).